The primary structure comprises 275 residues: tRNA (guanine-N(1)-)-methyltransferase (275 aa).

S-adenosyl-L-methionine is bound by residues G139 and 159–164 (IGDYIL).

The protein belongs to the RNA methyltransferase TrmD family. In terms of assembly, homodimer.

The protein localises to the cytoplasm. It catalyses the reaction guanosine(37) in tRNA + S-adenosyl-L-methionine = N(1)-methylguanosine(37) in tRNA + S-adenosyl-L-homocysteine + H(+). Functionally, specifically methylates guanosine-37 in various tRNAs. This Lachnoclostridium phytofermentans (strain ATCC 700394 / DSM 18823 / ISDg) (Clostridium phytofermentans) protein is tRNA (guanine-N(1)-)-methyltransferase.